The sequence spans 581 residues: Proline--tRNA ligase (581 aa).

This sequence belongs to the class-II aminoacyl-tRNA synthetase family. ProS type 1 subfamily. As to quaternary structure, homodimer.

The protein resides in the cytoplasm. It catalyses the reaction tRNA(Pro) + L-proline + ATP = L-prolyl-tRNA(Pro) + AMP + diphosphate. Its function is as follows. Catalyzes the attachment of proline to tRNA(Pro) in a two-step reaction: proline is first activated by ATP to form Pro-AMP and then transferred to the acceptor end of tRNA(Pro). As ProRS can inadvertently accommodate and process non-cognate amino acids such as alanine and cysteine, to avoid such errors it has two additional distinct editing activities against alanine. One activity is designated as 'pretransfer' editing and involves the tRNA(Pro)-independent hydrolysis of activated Ala-AMP. The other activity is designated 'posttransfer' editing and involves deacylation of mischarged Ala-tRNA(Pro). The misacylated Cys-tRNA(Pro) is not edited by ProRS. This Variovorax paradoxus (strain S110) protein is Proline--tRNA ligase.